The chain runs to 527 residues: NAD(P)H-quinone oxidoreductase chain 4 1 (527 aa).

A run of 13 helical transmembrane segments spans residues 6-26 (FPWL…VPII), 36-56 (WFAL…FYSS), 91-111 (LIIL…PVTF), 113-133 (PKLF…VFAV), 136-156 (LLLF…ILSI), 169-189 (FILY…TMAF), 212-232 (LFLY…FPLH), 243-263 (TAPA…YALL), 275-295 (AVFA…AALT), 306-326 (IAYS…SFTD), 331-351 (GAML…FMVG), 387-407 (LALP…GFAT), and 417-437 (VIIV…LLSM).

It belongs to the complex I subunit 4 family.

The protein resides in the cellular thylakoid membrane. The catalysed reaction is a plastoquinone + NADH + (n+1) H(+)(in) = a plastoquinol + NAD(+) + n H(+)(out). It carries out the reaction a plastoquinone + NADPH + (n+1) H(+)(in) = a plastoquinol + NADP(+) + n H(+)(out). Functionally, NDH-1 shuttles electrons from NAD(P)H, via FMN and iron-sulfur (Fe-S) centers, to quinones in the respiratory chain. The immediate electron acceptor for the enzyme in this species is believed to be plastoquinone. Couples the redox reaction to proton translocation (for every two electrons transferred, four hydrogen ions are translocated across the cytoplasmic membrane), and thus conserves the redox energy in a proton gradient. The polypeptide is NAD(P)H-quinone oxidoreductase chain 4 1 (Microcystis aeruginosa (strain NIES-843 / IAM M-2473)).